We begin with the raw amino-acid sequence, 1273 residues long: DNA-directed RNA polymerase subunit beta (1273 aa).

This sequence belongs to the RNA polymerase beta chain family. In terms of assembly, the RNAP catalytic core consists of 2 alpha, 1 beta, 1 beta' and 1 omega subunit. When a sigma factor is associated with the core the holoenzyme is formed, which can initiate transcription.

The enzyme catalyses RNA(n) + a ribonucleoside 5'-triphosphate = RNA(n+1) + diphosphate. In terms of biological role, DNA-dependent RNA polymerase catalyzes the transcription of DNA into RNA using the four ribonucleoside triphosphates as substrates. The protein is DNA-directed RNA polymerase subunit beta of Aster yellows witches'-broom phytoplasma (strain AYWB).